Reading from the N-terminus, the 174-residue chain is MRLLITLFAIFALFNCSLANTATNVGEFLIGFAQGVEITLNSNSQACLSGVTSTFDEFQTAFQLIDSGFKSKSINQVKTGITDLGLAIQQVPVDYDACGITQFVEEIEEIASKLSSGVDGIVDVILKEAVEIWEHKNDLSADFKTAIADWKSSNYNGSGVAVGSIIGDLIQGAK.

A signal peptide spans Met-1–Ala-19. Asn-156 carries an N-linked (GlcNAc...) asparagine glycan.

It belongs to the Sct family. Post-translationally, probably contains disulfide bonds.

It is found in the secreted. The protein resides in the extracellular vesicle. The sequence is that of Secreted protein A (p17) from Dictyostelium discoideum (Social amoeba).